We begin with the raw amino-acid sequence, 127 residues long: MNFDRTFLTFLGVIMLVHLHIFFAFLSLALLVIRGAMQLNGKNWRSIKLLKILPHLSDTLLIVSGVVILYLFAFGIEWWLVAKFALLILYIVFAAKFFSKKVSQPKSIFFWLACVSFIGAMLIAYLK.

Transmembrane regions (helical) follow at residues 13-33 (VIML…LLVI), 61-81 (LIVS…WWLV), 82-102 (AKFA…SKKV), and 107-127 (SIFF…AYLK).

Belongs to the SirB2 family.

Its subcellular location is the cell inner membrane. The sequence is that of Protein HI_1253 from Haemophilus influenzae (strain ATCC 51907 / DSM 11121 / KW20 / Rd).